Reading from the N-terminus, the 201-residue chain is Small ribosomal subunit protein uS5 (201 aa).

Residues 1-28 (MAGPQRRGSGAGGGERRDRKGRDGGAGA) form a disordered region. Residues 14–23 (GERRDRKGRD) show a composition bias toward basic and acidic residues. In terms of domain architecture, S5 DRBM spans 34 to 97 (YVERVVAINR…EEAKKHFFKV (64 aa)).

The protein belongs to the universal ribosomal protein uS5 family. Part of the 30S ribosomal subunit. Contacts proteins S4 and S8.

With S4 and S12 plays an important role in translational accuracy. In terms of biological role, located at the back of the 30S subunit body where it stabilizes the conformation of the head with respect to the body. The polypeptide is Small ribosomal subunit protein uS5 (Streptomyces coelicolor (strain ATCC BAA-471 / A3(2) / M145)).